The sequence spans 200 residues: Probable nicotinate-nucleotide adenylyltransferase (200 aa).

Belongs to the NadD family.

It catalyses the reaction nicotinate beta-D-ribonucleotide + ATP + H(+) = deamido-NAD(+) + diphosphate. It participates in cofactor biosynthesis; NAD(+) biosynthesis; deamido-NAD(+) from nicotinate D-ribonucleotide: step 1/1. Its function is as follows. Catalyzes the reversible adenylation of nicotinate mononucleotide (NaMN) to nicotinic acid adenine dinucleotide (NaAD). The polypeptide is Probable nicotinate-nucleotide adenylyltransferase (Lachnoclostridium phytofermentans (strain ATCC 700394 / DSM 18823 / ISDg) (Clostridium phytofermentans)).